The sequence spans 243 residues: ATP synthase subunit a (243 aa).

8 helical membrane-spanning segments follow: residues 28-48 (SSLY…AGVF), 52-72 (VIPG…LGII), 83-103 (YFPL…VGML), 114-134 (HIVV…LIGL), 141-161 (FFAM…MIFL), 177-197 (LTAN…FVYP), 200-220 (LLIS…EVFI), and 221-241 (AMLQ…DSLF).

The protein belongs to the ATPase A chain family. In terms of assembly, F-type ATPases have 2 components, CF(1) - the catalytic core - and CF(0) - the membrane proton channel. CF(1) has five subunits: alpha(3), beta(3), gamma(1), delta(1), epsilon(1). CF(0) has three main subunits: a(1), b(2) and c(9-12). The alpha and beta chains form an alternating ring which encloses part of the gamma chain. CF(1) is attached to CF(0) by a central stalk formed by the gamma and epsilon chains, while a peripheral stalk is formed by the delta and b chains.

Its subcellular location is the cell inner membrane. Functionally, key component of the proton channel; it plays a direct role in the translocation of protons across the membrane. The protein is ATP synthase subunit a of Neorickettsia sennetsu (strain ATCC VR-367 / Miyayama) (Ehrlichia sennetsu).